Here is a 274-residue protein sequence, read N- to C-terminus: Orotidine 5'-phosphate decarboxylase (274 aa).

The active-site Proton donor is the Lys95.

The protein belongs to the OMP decarboxylase family. Type 2 subfamily.

It carries out the reaction orotidine 5'-phosphate + H(+) = UMP + CO2. It functions in the pathway pyrimidine metabolism; UMP biosynthesis via de novo pathway; UMP from orotate: step 2/2. In Mycobacterium avium (strain 104), this protein is Orotidine 5'-phosphate decarboxylase.